A 196-amino-acid polypeptide reads, in one-letter code: MATALASKLSKGRSLLGGLCNAFSGLMNSSSNGMMNGSILSQQQHRTFIQMGTILKCVDNSCAKEVMCIQSLRGKKGARLGDIIVGSVKEANPIVQKKVKKDAIPKGKVKKGMVVYGVVVRAAMPKGRADGSQVKFDDNAIVVVGIKEKKGQNNSHGSKRKMEYNQPTGTRVFGPVPHEMRLRKQLKILSLAQHIV.

The transit peptide at 1–62 (MATALASKLS…TILKCVDNSC (62 aa)) directs the protein to the mitochondrion. The tract at residues 148–175 (EKKGQNNSHGSKRKMEYNQPTGTRVFGP) is disordered.

The protein belongs to the universal ribosomal protein uL14 family. As to quaternary structure, part of the mitochondrial 50S ribosomal subunit. Mostly expressed in pistils and inflorescences, including floral organs and meristems, and, to a lower extent, in leaves.

It is found in the mitochondrion. In terms of biological role, binds to 23S rRNA in mitochondrion. Required for the formation of the proximal region of the ovule primordium during floral organogenesis, thus participating in patterning and growth of ovule. Also regulates the initiation and/or maintenance of integument and embryo sac ontogenesis. Prevents inappropriate cell death in the young ovule. In Arabidopsis thaliana (Mouse-ear cress), this protein is Large ribosomal subunit protein uL14my (HLL).